The sequence spans 484 residues: uncharacterized protein (484 aa).

Low complexity predominate over residues 1-14 (MIDSTSTATATSKT). Residues 1-32 (MIDSTSTATATSKTVELNTNGSKTDASSENGT) are disordered. The span at 15 to 32 (VELNTNGSKTDASSENGT) shows a compositional bias: polar residues. The residue at position 305 (lysine 305) is an N6-(pyridoxal phosphate)lysine.

The protein belongs to the class-III pyridoxal-phosphate-dependent aminotransferase family. It depends on pyridoxal 5'-phosphate as a cofactor.

This is an uncharacterized protein from Schizosaccharomyces pombe (strain 972 / ATCC 24843) (Fission yeast).